The chain runs to 99 residues: Malonate decarboxylase acyl carrier protein (99 aa).

An O-(phosphoribosyl dephospho-coenzyme A)serine modification is found at S25.

The protein belongs to the MdcC family. Covalently binds the prosthetic group of malonate decarboxylase.

It localises to the cytoplasm. Its function is as follows. Subunit of malonate decarboxylase, it is an acyl carrier protein to which acetyl and malonyl thioester residues are bound via a 2'-(5''-phosphoribosyl)-3'-dephospho-CoA prosthetic group and turn over during the catalytic mechanism. In Pseudomonas paraeruginosa (strain DSM 24068 / PA7) (Pseudomonas aeruginosa (strain PA7)), this protein is Malonate decarboxylase acyl carrier protein.